A 205-amino-acid polypeptide reads, in one-letter code: Non-specific lipid transfer protein GPI-anchored 21 (205 aa).

The N-terminal stretch at 1–27 (MNSNSFLISAALIFSLLSSNSPTSILA) is a signal peptide. Intrachain disulfides connect cysteine 33/cysteine 75, cysteine 44/cysteine 59, cysteine 60/cysteine 100, and cysteine 73/cysteine 109. Asparagine 89 carries an N-linked (GlcNAc...) asparagine glycan. A disordered region spans residues 116–182 (LPTPGPASFG…FAPPPPSSSP (67 aa)). Residues 126–156 (PTTSPTDSQTSDPEGSASFRPPTSPTTSQTP) are compositionally biased toward low complexity. Serine 179 is lipidated: GPI-anchor amidated serine. A propeptide spans 180–205 (SSPSSSHSLKLSYLLFAFAFTIIKFI) (removed in mature form).

Belongs to the plant LTP family.

It localises to the cell membrane. In terms of biological role, probable lipid transfer protein. The chain is Non-specific lipid transfer protein GPI-anchored 21 from Arabidopsis thaliana (Mouse-ear cress).